Consider the following 926-residue polypeptide: Up-regulator of cell proliferation (926 aa).

Ser3 is modified (phosphoserine). Residues 689–924 (RSRLVVLSAL…NIQQLIELLR (236 aa)) form the VLIG-type G domain.

It belongs to the TRAFAC class dynamin-like GTPase superfamily. Very large inducible GTPase (VLIG) family.

It is found in the cytoplasm. Its subcellular location is the nucleus. In terms of biological role, may be involved in cell cycle progression through the regulation of cyclin D1 expression. This Mus musculus (Mouse) protein is Up-regulator of cell proliferation (Urgcp).